Here is a 932-residue protein sequence, read N- to C-terminus: Isoleucine--tRNA ligase (932 aa).

Residues 58 to 68 (PYANGNLHLGH) carry the 'HIGH' region motif. An L-isoleucyl-5'-AMP-binding site is contributed by glutamate 567. A 'KMSKS' region motif is present at residues 608-612 (KMSKS). Lysine 611 contributes to the ATP binding site. Cysteine 895, cysteine 898, cysteine 915, and cysteine 918 together coordinate Zn(2+).

This sequence belongs to the class-I aminoacyl-tRNA synthetase family. IleS type 1 subfamily. In terms of assembly, monomer. The cofactor is Zn(2+).

The protein resides in the cytoplasm. It carries out the reaction tRNA(Ile) + L-isoleucine + ATP = L-isoleucyl-tRNA(Ile) + AMP + diphosphate. Functionally, catalyzes the attachment of isoleucine to tRNA(Ile). As IleRS can inadvertently accommodate and process structurally similar amino acids such as valine, to avoid such errors it has two additional distinct tRNA(Ile)-dependent editing activities. One activity is designated as 'pretransfer' editing and involves the hydrolysis of activated Val-AMP. The other activity is designated 'posttransfer' editing and involves deacylation of mischarged Val-tRNA(Ile). The polypeptide is Isoleucine--tRNA ligase (Azoarcus sp. (strain BH72)).